Here is a 616-residue protein sequence, read N- to C-terminus: Glutamine--fructose-6-phosphate aminotransferase [isomerizing] (616 aa).

Cys2 acts as the Nucleophile; for GATase activity in catalysis. The Glutamine amidotransferase type-2 domain maps to 2-221 (CGIVGYVGTD…QDQIVTITPE (220 aa)). SIS domains are found at residues 288-428 (LGDE…VRGT) and 461-606 (LAHW…VDQP). Lys611 serves as the catalytic For Fru-6P isomerization activity.

In terms of assembly, homodimer.

The protein resides in the cytoplasm. The enzyme catalyses D-fructose 6-phosphate + L-glutamine = D-glucosamine 6-phosphate + L-glutamate. Functionally, catalyzes the first step in hexosamine metabolism, converting fructose-6P into glucosamine-6P using glutamine as a nitrogen source. This Leifsonia xyli subsp. xyli (strain CTCB07) protein is Glutamine--fructose-6-phosphate aminotransferase [isomerizing].